The following is a 437-amino-acid chain: Probable inactive DNA (cytosine-5)-methyltransferase DRM1B (437 aa).

UBA domains are found at residues 20–60 (SAPS…LLQL) and 120–164 (EMSE…IYAP). One can recognise an SAM-dependent MTase DRM-type domain in the interval 243-437 (VHRNLPDHAL…LIQLHTTSLC (195 aa)).

This sequence belongs to the class I-like SAM-binding methyltransferase superfamily. DRM-methyltransferase family.

The protein localises to the nucleus. Its function is as follows. Involved in de novo DNA methylation. Involved in RNA-directed DNA methylation (RdDM). The polypeptide is Probable inactive DNA (cytosine-5)-methyltransferase DRM1B (Oryza sativa subsp. japonica (Rice)).